Reading from the N-terminus, the 521-residue chain is UDP-N-acetylmuramate--L-alanine ligase (521 aa).

136–142 lines the ATP pocket; it reads GAHGKTT.

It belongs to the MurCDEF family.

Its subcellular location is the cytoplasm. The enzyme catalyses UDP-N-acetyl-alpha-D-muramate + L-alanine + ATP = UDP-N-acetyl-alpha-D-muramoyl-L-alanine + ADP + phosphate + H(+). The protein operates within cell wall biogenesis; peptidoglycan biosynthesis. In terms of biological role, cell wall formation. The chain is UDP-N-acetylmuramate--L-alanine ligase from Bifidobacterium adolescentis (strain ATCC 15703 / DSM 20083 / NCTC 11814 / E194a).